The following is a 314-amino-acid chain: Fibrinogen-like protein 1 (314 aa).

The first 22 residues, 1 to 22, serve as a signal peptide directing secretion; the sequence is MGEIRSFLLVTIALMMGREIWA. Residues 25-59 adopt a coiled-coil conformation; that stretch reads NSKCLLEQERLRAQVQQLETRVKQQQARIAQLMHE. The 233-residue stretch at 76–308 folds into the Fibrinogen C-terminal domain; it reads LGGKRQYADC…SVVMKIRPND (233 aa). Intrachain disulfides connect Cys-85-Cys-114 and Cys-250-Cys-263.

In terms of assembly, homodimer. Interacts (via the Fibrinogen C-terminal domain) with LAG3 (via Ig-like domains 1 and 2).

It is found in the secreted. Immune suppressive molecule that inhibits antigen-specific T-cell activation by acting as a major ligand of LAG3. Responsible for LAG3 T-cell inhibitory function. Binds LAG3 independently from MHC class II (MHC-II). Secreted by, and promotes growth of, hepatocytes. This is Fibrinogen-like protein 1 from Mesocricetus auratus (Golden hamster).